Here is a 229-residue protein sequence, read N- to C-terminus: 7-cyano-7-deazaguanine synthase (229 aa).

An ATP-binding site is contributed by 9-19; that stretch reads LSGGLDSTTVL. Residues Cys-192, Cys-202, Cys-205, and Cys-208 each coordinate Zn(2+).

Belongs to the QueC family. The cofactor is Zn(2+).

The catalysed reaction is 7-carboxy-7-deazaguanine + NH4(+) + ATP = 7-cyano-7-deazaguanine + ADP + phosphate + H2O + H(+). The protein operates within purine metabolism; 7-cyano-7-deazaguanine biosynthesis. In terms of biological role, catalyzes the ATP-dependent conversion of 7-carboxy-7-deazaguanine (CDG) to 7-cyano-7-deazaguanine (preQ(0)). The polypeptide is 7-cyano-7-deazaguanine synthase (Kineococcus radiotolerans (strain ATCC BAA-149 / DSM 14245 / SRS30216)).